Here is a 160-residue protein sequence, read N- to C-terminus: Eukaryotic translation initiation factor 5A-4 (160 aa).

Residues 1-12 (MSDEEHHFESKA) are compositionally biased toward basic and acidic residues. Positions 1–21 (MSDEEHHFESKADAGASKTYP) are disordered. Hypusine is present on Lys52.

This sequence belongs to the eIF-5A family. Post-translationally, lys-52 undergoes hypusination, a unique post-translational modification that consists in the addition of a butylamino group from spermidine to lysine side chain, leading to the formation of the unusual amino acid hypusine. eIF-5As are the only known proteins to undergo this modification, which is essential for their function.

Functionally, translation factor that promotes translation elongation and termination, particularly upon ribosome stalling at specific amino acid sequence contexts. Binds between the exit (E) and peptidyl (P) site of the ribosome and promotes rescue of stalled ribosome: specifically required for efficient translation of polyproline-containing peptides as well as other motifs that stall the ribosome. Acts as a ribosome quality control (RQC) cofactor by joining the RQC complex to facilitate peptidyl transfer during CAT tailing step. The sequence is that of Eukaryotic translation initiation factor 5A-4 from Solanum lycopersicum (Tomato).